Reading from the N-terminus, the 598-residue chain is Elongation factor 4 (598 aa).

Residues 3–185 (QHIRNFSIIA…MIVARIPPPE (183 aa)) enclose the tr-type G domain. Residues 15–20 (DHGKST) and 132–135 (NKID) each bind GTP.

It belongs to the TRAFAC class translation factor GTPase superfamily. Classic translation factor GTPase family. LepA subfamily.

Its subcellular location is the cell inner membrane. The catalysed reaction is GTP + H2O = GDP + phosphate + H(+). Its function is as follows. Required for accurate and efficient protein synthesis under certain stress conditions. May act as a fidelity factor of the translation reaction, by catalyzing a one-codon backward translocation of tRNAs on improperly translocated ribosomes. Back-translocation proceeds from a post-translocation (POST) complex to a pre-translocation (PRE) complex, thus giving elongation factor G a second chance to translocate the tRNAs correctly. Binds to ribosomes in a GTP-dependent manner. The chain is Elongation factor 4 from Nitrosomonas eutropha (strain DSM 101675 / C91 / Nm57).